Reading from the N-terminus, the 179-residue chain is Peptide deformylase (179 aa).

Fe cation contacts are provided by cysteine 102 and histidine 144. Glutamate 145 is a catalytic residue. Residue histidine 148 participates in Fe cation binding.

It belongs to the polypeptide deformylase family. It depends on Fe(2+) as a cofactor.

The catalysed reaction is N-terminal N-formyl-L-methionyl-[peptide] + H2O = N-terminal L-methionyl-[peptide] + formate. Its function is as follows. Removes the formyl group from the N-terminal Met of newly synthesized proteins. Requires at least a dipeptide for an efficient rate of reaction. N-terminal L-methionine is a prerequisite for activity but the enzyme has broad specificity at other positions. This chain is Peptide deformylase, found in Wolbachia sp. subsp. Drosophila simulans (strain wRi).